Here is a 390-residue protein sequence, read N- to C-terminus: LL-diaminopimelate aminotransferase 2 (390 aa).

Substrate contacts are provided by Y13 and G38. Pyridoxal 5'-phosphate-binding positions include Y67, 102–103 (SK), Y127, N177, Y208, and 236–238 (SLS). Residues K103, Y127, and N177 each contribute to the substrate site. K239 carries the N6-(pyridoxal phosphate)lysine modification. R247 is a binding site for pyridoxal 5'-phosphate. R365 is a binding site for substrate.

The protein belongs to the class-I pyridoxal-phosphate-dependent aminotransferase family. LL-diaminopimelate aminotransferase subfamily. As to quaternary structure, homodimer. The cofactor is pyridoxal 5'-phosphate.

The enzyme catalyses (2S,6S)-2,6-diaminopimelate + 2-oxoglutarate = (S)-2,3,4,5-tetrahydrodipicolinate + L-glutamate + H2O + H(+). The protein operates within amino-acid biosynthesis; L-lysine biosynthesis via DAP pathway; LL-2,6-diaminopimelate from (S)-tetrahydrodipicolinate (aminotransferase route): step 1/1. Its function is as follows. Involved in the synthesis of meso-diaminopimelate (m-DAP or DL-DAP), required for both lysine and peptidoglycan biosynthesis. Catalyzes the direct conversion of tetrahydrodipicolinate to LL-diaminopimelate. This chain is LL-diaminopimelate aminotransferase 2, found in Nostoc sp. (strain PCC 7120 / SAG 25.82 / UTEX 2576).